Consider the following 153-residue polypeptide: Small ribosomal subunit protein uS13 (153 aa).

This sequence belongs to the universal ribosomal protein uS13 family. Part of the 30S ribosomal subunit. Forms a loose heterodimer with protein S19. Forms two bridges to the 50S subunit in the 70S ribosome.

In terms of biological role, located at the top of the head of the 30S subunit, it contacts several helices of the 16S rRNA. In the 70S ribosome it contacts the 23S rRNA (bridge B1a) and protein L5 of the 50S subunit (bridge B1b), connecting the 2 subunits; these bridges are implicated in subunit movement. The chain is Small ribosomal subunit protein uS13 from Pyrobaculum calidifontis (strain DSM 21063 / JCM 11548 / VA1).